We begin with the raw amino-acid sequence, 31 residues long: Bacteriocin lactocin-705 (31 aa).

Its function is as follows. Antibacterial activity against several lactic acid bacteria, Listeria, Streptococci, etc. The polypeptide is Bacteriocin lactocin-705 (Lacticaseibacillus paracasei (Lactobacillus paracasei)).